A 101-amino-acid polypeptide reads, in one-letter code: Urease subunit beta (101 aa).

Belongs to the urease beta subunit family. In terms of assembly, heterotrimer of UreA (gamma), UreB (beta) and UreC (alpha) subunits. Three heterotrimers associate to form the active enzyme.

It localises to the cytoplasm. The enzyme catalyses urea + 2 H2O + H(+) = hydrogencarbonate + 2 NH4(+). It functions in the pathway nitrogen metabolism; urea degradation; CO(2) and NH(3) from urea (urease route): step 1/1. This chain is Urease subunit beta, found in Ruegeria pomeroyi (strain ATCC 700808 / DSM 15171 / DSS-3) (Silicibacter pomeroyi).